We begin with the raw amino-acid sequence, 300 residues long: 4-diphosphocytidyl-2-C-methyl-D-erythritol kinase (300 aa).

Residue Lys-17 is part of the active site. 102–112 contributes to the ATP binding site; it reads PVAAGIGGGSA. Asp-144 is an active-site residue.

Belongs to the GHMP kinase family. IspE subfamily.

The catalysed reaction is 4-CDP-2-C-methyl-D-erythritol + ATP = 4-CDP-2-C-methyl-D-erythritol 2-phosphate + ADP + H(+). Its pathway is isoprenoid biosynthesis; isopentenyl diphosphate biosynthesis via DXP pathway; isopentenyl diphosphate from 1-deoxy-D-xylulose 5-phosphate: step 3/6. Catalyzes the phosphorylation of the position 2 hydroxy group of 4-diphosphocytidyl-2C-methyl-D-erythritol. The sequence is that of 4-diphosphocytidyl-2-C-methyl-D-erythritol kinase from Bradyrhizobium sp. (strain ORS 278).